The following is a 180-amino-acid chain: MQSTLPSLFIVGPMGAGKTTVGKLLAKHLGRDFIDSDHYICEQTGADIPWIFEKEGETGFREREARAIAELTALPNVVLATGGGVVMQPQNRDNLTKQGITIYLRANVDVQLKRTAKDKSRPLLNTPNPRAVLQSLFDVRDPLYREVADIVVETGDGYPRYMLKKIIEALKQHYPEHMKS.

15–20 (GAGKTT) lines the ATP pocket. Residue Thr-19 coordinates Mg(2+). The substrate site is built by Asp-37, Arg-61, and Gly-83. Arg-121 lines the ATP pocket. Arg-140 serves as a coordination point for substrate.

The protein belongs to the shikimate kinase family. As to quaternary structure, monomer. Mg(2+) serves as cofactor.

It localises to the cytoplasm. It catalyses the reaction shikimate + ATP = 3-phosphoshikimate + ADP + H(+). Its pathway is metabolic intermediate biosynthesis; chorismate biosynthesis; chorismate from D-erythrose 4-phosphate and phosphoenolpyruvate: step 5/7. Functionally, catalyzes the specific phosphorylation of the 3-hydroxyl group of shikimic acid using ATP as a cosubstrate. This is Shikimate kinase from Psychrobacter sp. (strain PRwf-1).